We begin with the raw amino-acid sequence, 209 residues long: Kunitz trypsin inhibitor 1 (209 aa).

An N-terminal signal peptide occupies residues 1–22 (MKATISITTIFLVVALAAPSLA). 2 disulfide bridges follow: Cys-63–Cys-107 and Cys-154–Cys-162. N-linked (GlcNAc...) asparagine glycosylation occurs at Asn-156.

The protein belongs to the protease inhibitor I3 (leguminous Kunitz-type inhibitor) family.

In terms of biological role, exhibits Kunitz trypsin protease inhibitor activity. The sequence is that of Kunitz trypsin inhibitor 1 from Arabidopsis thaliana (Mouse-ear cress).